Here is a 35-residue protein sequence, read N- to C-terminus: Cupiennin-2d (35 aa).

Residue Q35 is modified to Glutamine amide.

As to expression, expressed by the venom gland.

It localises to the secreted. The protein is Cupiennin-2d of Cupiennius salei (American wandering spider).